A 355-amino-acid polypeptide reads, in one-letter code: Holliday junction branch migration complex subunit RuvB (355 aa).

The segment at 4-190 (TDKLAAERII…FGIVARLEFY (187 aa)) is large ATPase domain (RuvB-L). ATP-binding positions include Leu-29, Arg-30, Gly-71, Lys-74, Thr-75, Thr-76, 137–139 (EDY), Arg-180, Tyr-190, and Arg-227. Mg(2+) is bound at residue Thr-75. The tract at residues 191–261 (DADQLARIVR…VADAALAMLD (71 aa)) is small ATPAse domain (RuvB-S). A head domain (RuvB-H) region spans residues 264–355 (PVGFDLMDRK…RGMWDTPAGK (92 aa)). Positions 300, 319, and 324 each coordinate DNA.

Belongs to the RuvB family. In terms of assembly, homohexamer. Forms an RuvA(8)-RuvB(12)-Holliday junction (HJ) complex. HJ DNA is sandwiched between 2 RuvA tetramers; dsDNA enters through RuvA and exits via RuvB. An RuvB hexamer assembles on each DNA strand where it exits the tetramer. Each RuvB hexamer is contacted by two RuvA subunits (via domain III) on 2 adjacent RuvB subunits; this complex drives branch migration. In the full resolvosome a probable DNA-RuvA(4)-RuvB(12)-RuvC(2) complex forms which resolves the HJ.

The protein localises to the cytoplasm. The catalysed reaction is ATP + H2O = ADP + phosphate + H(+). The RuvA-RuvB-RuvC complex processes Holliday junction (HJ) DNA during genetic recombination and DNA repair, while the RuvA-RuvB complex plays an important role in the rescue of blocked DNA replication forks via replication fork reversal (RFR). RuvA specifically binds to HJ cruciform DNA, conferring on it an open structure. The RuvB hexamer acts as an ATP-dependent pump, pulling dsDNA into and through the RuvAB complex. RuvB forms 2 homohexamers on either side of HJ DNA bound by 1 or 2 RuvA tetramers; 4 subunits per hexamer contact DNA at a time. Coordinated motions by a converter formed by DNA-disengaged RuvB subunits stimulates ATP hydrolysis and nucleotide exchange. Immobilization of the converter enables RuvB to convert the ATP-contained energy into a lever motion, pulling 2 nucleotides of DNA out of the RuvA tetramer per ATP hydrolyzed, thus driving DNA branch migration. The RuvB motors rotate together with the DNA substrate, which together with the progressing nucleotide cycle form the mechanistic basis for DNA recombination by continuous HJ branch migration. Branch migration allows RuvC to scan DNA until it finds its consensus sequence, where it cleaves and resolves cruciform DNA. This Burkholderia ambifaria (strain ATCC BAA-244 / DSM 16087 / CCUG 44356 / LMG 19182 / AMMD) (Burkholderia cepacia (strain AMMD)) protein is Holliday junction branch migration complex subunit RuvB.